The following is a 158-amino-acid chain: NAD(P)H-quinone oxidoreductase subunit J, chloroplastic (158 aa).

The protein belongs to the complex I 30 kDa subunit family. NDH is composed of at least 16 different subunits, 5 of which are encoded in the nucleus.

The protein localises to the plastid. Its subcellular location is the chloroplast thylakoid membrane. It catalyses the reaction a plastoquinone + NADH + (n+1) H(+)(in) = a plastoquinol + NAD(+) + n H(+)(out). The catalysed reaction is a plastoquinone + NADPH + (n+1) H(+)(in) = a plastoquinol + NADP(+) + n H(+)(out). NDH shuttles electrons from NAD(P)H:plastoquinone, via FMN and iron-sulfur (Fe-S) centers, to quinones in the photosynthetic chain and possibly in a chloroplast respiratory chain. The immediate electron acceptor for the enzyme in this species is believed to be plastoquinone. Couples the redox reaction to proton translocation, and thus conserves the redox energy in a proton gradient. The chain is NAD(P)H-quinone oxidoreductase subunit J, chloroplastic from Acorus calamus var. americanus (American sweet flag).